Here is a 102-residue protein sequence, read N- to C-terminus: Small ribosomal subunit protein uS10 (102 aa).

Belongs to the universal ribosomal protein uS10 family. Part of the 30S ribosomal subunit.

In terms of biological role, involved in the binding of tRNA to the ribosomes. This chain is Small ribosomal subunit protein uS10, found in Syntrophotalea carbinolica (strain DSM 2380 / NBRC 103641 / GraBd1) (Pelobacter carbinolicus).